The following is an 867-amino-acid chain: Bifunctional isopimaradiene synthase, chloroplastic (867 aa).

The transit peptide at 1 to 68 (MALLSSSLSS…VGEGTTSLPY (68 aa)) directs the protein to the chloroplast. Residue K267 participates in substrate binding. Mg(2+) contacts are provided by D400 and D402. Positions 400–403 (DIDD) match the DXDD motif motif. K487 serves as a coordination point for substrate. Positions 619, 623, 763, 767, and 771 each coordinate Mg(2+). Residues 619-623 (DDLYD) carry the DDXXD motif motif.

This sequence belongs to the terpene synthase family. Tpsd subfamily. Mg(2+) serves as cofactor.

Its subcellular location is the plastid. It is found in the chloroplast. The catalysed reaction is (2E,6E,10E)-geranylgeranyl diphosphate = (+)-copalyl diphosphate. It carries out the reaction (+)-copalyl diphosphate = isopimara-7,15-diene + diphosphate. The protein operates within terpene metabolism; oleoresin biosynthesis. Its function is as follows. Involved in defensive oleoresin formation in conifers in response to insect attack or other injury. Involved in diterpene (C20) olefins biosynthesis. Bifunctional enzyme that catalyzes two sequential cyclizations of geranylgeranyl diphosphate (GGPP) to isopimara-7,15-diene. The sequence is that of Bifunctional isopimaradiene synthase, chloroplastic (TPS-ISO) from Picea abies (Norway spruce).